A 329-amino-acid polypeptide reads, in one-letter code: T-cell acute lymphocytic leukemia protein 1 homolog (329 aa).

Disordered stretches follow at residues 1 to 28 (MTERPPSEAARSDPQLEGQDAAEARMAP), 40 to 78 (ETSRAAPAEPPVIELGARSGAGGGPASGGGAARDLKGRD), and 91 to 125 (TELCRPPGPAPAPAPASAPAELPGDGRMVQLSPPA). At Ser-12 the chain carries Phosphoserine. Residues 58-70 (SGAGGGPASGGGA) show a composition bias toward gly residues. Over residues 96 to 106 (PPGPAPAPAPA) the composition is skewed to pro residues. Position 122 is a phosphoserine; by MAPK (Ser-122). At Ser-172 the chain carries Phosphoserine. The region spanning 187–239 (VRRIFTNSRERWRQQNVNGAFAELRKLIPTHPPDKKLSKNEILRLAMKYINFL) is the bHLH domain. The interval 247 to 329 (EEEGTQRAKP…LPAADGAGPR (83 aa)) is disordered. A compositionally biased stretch (gly residues) spans 263-273 (GAGGGGAGGGI). The segment covering 317–329 (PALLPAADGAGPR) has biased composition (low complexity).

In terms of assembly, efficient DNA binding requires dimerization with another bHLH protein. Forms heterodimers with TCF3. Binds to the LIM domain containing protein LMO2 and to DRG1. Can assemble in a complex with LDB1 and LMO2. Component of a TAL-1 complex composed at least of CBFA2T3, LDB1, TAL1 and TCF3. Interacts with SBNO2; this interaction inhibits TAL1 occupancy of the DCSTAMP promoter, leading to the activation of the DCSTAMP promoter by the transcription factor MITF. Phosphorylated on serine residues. Phosphorylation of Ser-122 by MAPK is strongly stimulated by hypoxia. In terms of processing, ubiquitinated; subsequent to hypoxia-dependent phosphorylation of Ser-122, ubiquitination targets the protein for rapid degradation via the ubiquitin system. This process may be characteristic for microvascular endothelial cells, since it could not be observed in large vessel endothelial cells. In terms of tissue distribution, erythroid and myeloid cells.

The protein resides in the nucleus. Its function is as follows. Implicated in the genesis of hemopoietic malignancies. It may play an important role in hemopoietic differentiation. Serves as a positive regulator of erythroid differentiation. The protein is T-cell acute lymphocytic leukemia protein 1 homolog (Tal1) of Mus musculus (Mouse).